Consider the following 243-residue polypeptide: 2-C-methyl-D-erythritol 4-phosphate cytidylyltransferase (243 aa).

It belongs to the IspD/TarI cytidylyltransferase family. IspD subfamily.

It catalyses the reaction 2-C-methyl-D-erythritol 4-phosphate + CTP + H(+) = 4-CDP-2-C-methyl-D-erythritol + diphosphate. It participates in isoprenoid biosynthesis; isopentenyl diphosphate biosynthesis via DXP pathway; isopentenyl diphosphate from 1-deoxy-D-xylulose 5-phosphate: step 2/6. Its function is as follows. Catalyzes the formation of 4-diphosphocytidyl-2-C-methyl-D-erythritol from CTP and 2-C-methyl-D-erythritol 4-phosphate (MEP). The protein is 2-C-methyl-D-erythritol 4-phosphate cytidylyltransferase of Rhodopirellula baltica (strain DSM 10527 / NCIMB 13988 / SH1).